The primary structure comprises 370 residues: Sphingolipid delta(4)-desaturase (370 aa).

A run of 3 helical transmembrane segments spans residues 68 to 88, 92 to 112, and 128 to 148; these read VMGV…TPVF, FLTL…LAIH, and LFAV…FQPY. The short motif at 112 to 116 is the Histidine box-1 element; sequence HELSH. Residues 149–153 carry the Histidine box-2 motif; that stretch reads HQLHH. 3 helical membrane-spanning segments follow: residues 173 to 193, 197 to 217, and 220 to 240; these read FLSS…FYAL, FITQ…QLIF, and VMVT…TFLA. A Histidine box-3 motif is present at residues 299-303; it reads HNEHH.

Belongs to the fatty acid desaturase type 1 family. DEGS subfamily.

The protein localises to the membrane. It carries out the reaction an N-acylsphinganine + 2 Fe(II)-[cytochrome b5] + O2 + 2 H(+) = an N-acylsphing-4-enine + 2 Fe(III)-[cytochrome b5] + 2 H2O. The protein operates within lipid metabolism; sphingolipid metabolism. Delta(4)-fatty-acid desaturase which introduces a double bond at the 4-position in the long-chain base (LCB) of ceramides. Required for the formation of the monounsaturated sphingoid base (E)-sphing-4-enine during glucosylceramide (GluCer) biosynthesis. In Candida albicans (strain SC5314 / ATCC MYA-2876) (Yeast), this protein is Sphingolipid delta(4)-desaturase.